The following is a 117-amino-acid chain: Hainantoxin-XV-4 (117 aa).

A signal peptide spans 1 to 20 (MKLCAVIIASLLVCVAVASS). The disordered stretch occupies residues 20–55 (SSDNQKEFAQEKEMTREETQSLGEHEKDDEVTGSEE). Residues 21–56 (SDNQKEFAQEKEMTREETQSLGEHEKDDEVTGSEER) constitute a propeptide that is removed on maturation. Over residues 23 to 55 (NQKEFAQEKEMTREETQSLGEHEKDDEVTGSEE) the composition is skewed to basic and acidic residues. Cystine bridges form between cysteine 58–cysteine 72, cysteine 65–cysteine 78, cysteine 69–cysteine 115, and cysteine 71–cysteine 91.

It belongs to the neurotoxin 03 (Tx2) family. 02 subfamily. HNTX-XV sub-subfamily. Expressed by the venom gland.

The protein resides in the secreted. In terms of biological role, putative ion channel inhibitor. The sequence is that of Hainantoxin-XV-4 from Cyriopagopus hainanus (Chinese bird spider).